Reading from the N-terminus, the 376-residue chain is Succinyl-diaminopimelate desuccinylase (376 aa).

His66 contacts Zn(2+). The active site involves Asp68. A Zn(2+)-binding site is contributed by Asp99. Glu133 functions as the Proton acceptor in the catalytic mechanism. The Zn(2+) site is built by Glu134, Glu162, and His348.

This sequence belongs to the peptidase M20A family. DapE subfamily. In terms of assembly, homodimer. It depends on Zn(2+) as a cofactor. Co(2+) is required as a cofactor.

It catalyses the reaction N-succinyl-(2S,6S)-2,6-diaminopimelate + H2O = (2S,6S)-2,6-diaminopimelate + succinate. It participates in amino-acid biosynthesis; L-lysine biosynthesis via DAP pathway; LL-2,6-diaminopimelate from (S)-tetrahydrodipicolinate (succinylase route): step 3/3. Functionally, catalyzes the hydrolysis of N-succinyl-L,L-diaminopimelic acid (SDAP), forming succinate and LL-2,6-diaminopimelate (DAP), an intermediate involved in the bacterial biosynthesis of lysine and meso-diaminopimelic acid, an essential component of bacterial cell walls. This is Succinyl-diaminopimelate desuccinylase from Xanthomonas euvesicatoria pv. vesicatoria (strain 85-10) (Xanthomonas campestris pv. vesicatoria).